Here is a 327-residue protein sequence, read N- to C-terminus: GTPase Obg (327 aa).

The region spanning methionine 1–leucine 159 is the Obg domain. Residues alanine 160–isoleucine 327 enclose the OBG-type G domain. ATP contacts are provided by residues glycine 166–serine 173, phenylalanine 191–isoleucine 195, aspartate 213–glycine 216, asparagine 280–glutamate 283, and serine 309–serine 311. Mg(2+)-binding residues include serine 173 and threonine 193.

Belongs to the TRAFAC class OBG-HflX-like GTPase superfamily. OBG GTPase family. As to quaternary structure, monomer. Mg(2+) serves as cofactor.

The protein localises to the cytoplasm. Functionally, an essential GTPase which binds GTP, GDP and possibly (p)ppGpp with moderate affinity, with high nucleotide exchange rates and a fairly low GTP hydrolysis rate. Plays a role in control of the cell cycle, stress response, ribosome biogenesis and in those bacteria that undergo differentiation, in morphogenesis control. The sequence is that of GTPase Obg from Prochlorococcus marinus (strain AS9601).